A 297-amino-acid polypeptide reads, in one-letter code: ATP synthase gamma chain (297 aa).

Belongs to the ATPase gamma chain family. In terms of assembly, F-type ATPases have 2 components, CF(1) - the catalytic core - and CF(0) - the membrane proton channel. CF(1) has five subunits: alpha(3), beta(3), gamma(1), delta(1), epsilon(1). CF(0) has three main subunits: a, b and c.

The protein localises to the cell membrane. In terms of biological role, produces ATP from ADP in the presence of a proton gradient across the membrane. The gamma chain is believed to be important in regulating ATPase activity and the flow of protons through the CF(0) complex. The sequence is that of ATP synthase gamma chain from Micrococcus luteus (strain ATCC 4698 / DSM 20030 / JCM 1464 / CCM 169 / CCUG 5858 / IAM 1056 / NBRC 3333 / NCIMB 9278 / NCTC 2665 / VKM Ac-2230) (Micrococcus lysodeikticus).